Consider the following 112-residue polypeptide: Nitrogen regulatory protein P-II (112 aa).

Tyr51 is modified (O-UMP-tyrosine).

The protein belongs to the P(II) protein family. In terms of assembly, homotrimer.

The protein resides in the plastid. It is found in the chloroplast. In terms of biological role, P-II indirectly controls the transcription of the glutamine synthetase gene (glnA). P-II prevents NR-II-catalyzed conversion of NR-I to NR-I-phosphate, the transcriptional activator of glnA. When P-II is uridylylated to P-II-UMP, these events are reversed. When the ratio of Gln to 2-ketoglutarate decreases, P-II is uridylylated to P-II-UMP, which causes the deadenylation of glutamine synthetase, so activating the enzyme. This chain is Nitrogen regulatory protein P-II (glnB), found in Pyropia yezoensis (Susabi-nori).